The following is a 688-amino-acid chain: NADH-ubiquinone oxidoreductase 75 kDa subunit (688 aa).

Positions 1-85 constitute a 2Fe-2S ferredoxin-type domain; it reads MLIRFKINEI…DESIETEIDE (85 aa). Residues Cys-38, Cys-49, Cys-52, and Cys-66 each contribute to the [2Fe-2S] cluster site. The 40-residue stretch at 85–124 folds into the 4Fe-4S His(Cys)3-ligated-type domain; that stretch reads EILKAREGVMEFLLINHPLDCPICDQGGECDLQEQTIAYG. [4Fe-4S] cluster contacts are provided by His-101, Cys-105, Cys-108, Cys-114, Cys-153, Cys-156, Cys-159, and Cys-204. A 4Fe-4S Mo/W bis-MGD-type domain is found at 223–279; that stretch reads LKNIKGIDIFDTVLTPINYQVKGGEIFRILPRINDRLNEEWITDKVRFHYESYKIIE.

This sequence belongs to the complex I 75 kDa subunit family. In terms of assembly, complex I is composed of about 45 different subunits. [2Fe-2S] cluster is required as a cofactor. It depends on [4Fe-4S] cluster as a cofactor.

It localises to the mitochondrion inner membrane. The enzyme catalyses a ubiquinone + NADH + 5 H(+)(in) = a ubiquinol + NAD(+) + 4 H(+)(out). In terms of biological role, core subunit of the mitochondrial membrane respiratory chain NADH dehydrogenase (Complex I) that is believed to belong to the minimal assembly required for catalysis. Complex I functions in the transfer of electrons from NADH to the respiratory chain. The immediate electron acceptor for the enzyme is believed to be ubiquinone. This is the largest subunit of complex I and it is a component of the iron-sulfur (IP) fragment of the enzyme. It may form part of the active site crevice where NADH is oxidized. This is NADH-ubiquinone oxidoreductase 75 kDa subunit (nad11) from Dictyostelium citrinum (Slime mold).